Here is a 374-residue protein sequence, read N- to C-terminus: Putative glutamate--cysteine ligase 2 (374 aa).

Belongs to the glutamate--cysteine ligase type 2 family. YbdK subfamily.

It carries out the reaction L-cysteine + L-glutamate + ATP = gamma-L-glutamyl-L-cysteine + ADP + phosphate + H(+). ATP-dependent carboxylate-amine ligase which exhibits weak glutamate--cysteine ligase activity. This Acidovorax sp. (strain JS42) protein is Putative glutamate--cysteine ligase 2.